Consider the following 595-residue polypeptide: uncharacterized protein (595 aa).

The disordered stretch occupies residues 112–180 (VRPPGYDPES…KDVFGRALPT (69 aa)). Basic and acidic residues-rich tracts occupy residues 120–133 (ESAK…EKHK) and 161–174 (RTQE…KDVF). A CCHC-type; degenerate zinc finger spans residues 211–228 (VKCLRCGNFGHQSGDRDC). 2 disordered regions span residues 254–290 (HTDP…IVAE) and 310–595 (KSMS…RRRN). Basic and acidic residues predominate over residues 256 to 267 (DPSEPLKWELKQ). Basic residues-rich tracts occupy residues 316–331 (KKRK…KHSS) and 351–364 (RGSK…KKSK). Composition is skewed to basic and acidic residues over residues 414 to 428 (HYYD…EIVD), 470 to 539 (VSEK…HVYE), and 547 to 565 (FSDR…ESNR). Positions 584-595 (RKHRYSTNRRRN) are enriched in basic residues.

This is an uncharacterized protein from Arabidopsis thaliana (Mouse-ear cress).